A 297-amino-acid polypeptide reads, in one-letter code: Adrenocorticotropic hormone receptor (297 aa).

Over 1–23 the chain is Extracellular; it reads MKHITDLYESVNSTMSNKSDCPP. Residues Asn-12 and Asn-17 are each glycosylated (N-linked (GlcNAc...) asparagine). 2 disulfides stabilise this stretch: Cys-21/Cys-253 and Cys-245/Cys-251. Residues 24–49 traverse the membrane as a helical segment; that stretch reads VVLPEEVFFTISVIGVLENLIVLLAV. Over 50 to 58 the chain is Cytoplasmic; it reads IKNKNLQSP. The helical transmembrane segment at 59 to 79 threads the bilayer; that stretch reads MYFFICSLAISDMLGSLYKIL. The Extracellular portion of the chain corresponds to 80-104; that stretch reads ENILIIFRNMGYLEPRGGFESTADD. Residues 105–126 traverse the membrane as a helical segment; it reads VVDSLFILSLLGSICSLSAIAA. Residues 127–147 are Cytoplasmic-facing; it reads DRYITIFHALQYQRLVTPRRA. A helical transmembrane segment spans residues 148–168; it reads AVVLLIIWACCIGSGITIVTF. Over 169 to 180 the chain is Extracellular; sequence SHHVPAVIAFTA. A helical transmembrane segment spans residues 181–199; that stretch reads LFPLMLVFILCLYGHMFLL. The Cytoplasmic portion of the chain corresponds to 200–217; it reads ARSHARRVSTLPRANMKG. The chain crosses the membrane as a helical span at residues 218 to 244; the sequence is AITLTVLLGVFIFCWAPFVLHILLMTF. Over 245-256 the chain is Extracellular; it reads CPADPYCACYLA. The chain crosses the membrane as a helical span at residues 257 to 278; that stretch reads LFQVNAVLIMCNAIIDPFIYAF. The Cytoplasmic portion of the chain corresponds to 279 to 297; that stretch reads RSPELRDAFKKMIICKRYP. Residue Cys-293 is the site of S-palmitoyl cysteine attachment.

The protein belongs to the G-protein coupled receptor 1 family. As to quaternary structure, homodimer. Interacts with corticotropin (ACTH). Interacts with MRAP; this interaction targets MC2R to the plasma membrane. Interacts with MRAP2; competing with MRAP for binding to MC2R and impairing the binding of corticotropin (ACTH). Ubiquitinated by MGRN1 that may be involved in post-endocytic trafficking and/or degradation of internalized receptor. In terms of tissue distribution, expressed in skin and adrenal gland tissues.

Its subcellular location is the cell membrane. In terms of biological role, hormone receptor primarily expressed in adrenal cortex that plays a key role in regulating adrenocortical function. Upon corticotropin (ACTH) binding, facilitates the release of adrenal glucocorticoids, including cortisol and corticosterone. In addition, MC2R is required for fetal and neonatal adrenal gland development. Mechanistically, activates adenylate cyclase (cAMP), the MAPK cascade as well as the cAMP-dependent protein kinase A pathway leading to steroidogenic factor 1/NR5A1-mediated transcriptional activation. This Sus scrofa (Pig) protein is Adrenocorticotropic hormone receptor (MC2R).